The chain runs to 406 residues: MSLGIPLSQLIVESPKPLSSGITGLDEILNLGFQARSIYEIFGPPGIGKTNFGIQLVCNSLEGIQQSEINDDKILWIETFQEMPINILRERFQKFKIVEENVKRVRITKFGQLLYFFQNLFKLSQSVRYKLVIIDGFSQLVCDHLCTLSKRGGGMIDKTIHELKCRHLILIFTVMTKYTHSTGSTIIVLNDCMNTAFQSNEFESLEEYYEILDDGSNFFVNSNNERRKNNVHILKSALVANIAMGSKDSTWEVFLRDRIGLFRDWNEQVDETVFVKSKRVKASSSQSNEGCTTIKEMRINKRNFENLRIAIVFNLHGEDRKREGRNLKRSRSSDDRNYIVKFDFDKATGQLRDIIDLKPDTANIASFPTLSTSSSSCSQVFNNIDSNDNPLPNAEGKEEIIYDSEG.

Position 43–50 (43–50) interacts with ATP; it reads GPPGIGKT. Residues 385–406 are disordered; that stretch reads DSNDNPLPNAEGKEEIIYDSEG.

This sequence belongs to the RecA family. RAD55 subfamily.

It is found in the nucleus. Its function is as follows. Required for radiation resistance and meiotic viability and presumably acts in recombination and recombinational DNA repair pathways. This Saccharomyces cerevisiae (strain ATCC 204508 / S288c) (Baker's yeast) protein is DNA repair protein RAD55 (RAD55).